Here is an 82-residue protein sequence, read N- to C-terminus: RNA-binding protein BH0128 (82 aa).

It belongs to the eukaryotic ribosomal protein eL8 family.

In Halalkalibacterium halodurans (strain ATCC BAA-125 / DSM 18197 / FERM 7344 / JCM 9153 / C-125) (Bacillus halodurans), this protein is RNA-binding protein BH0128.